The chain runs to 133 residues: Major seminal plasma glycoprotein PSP-I (133 aa).

Positions 1 to 24 (MKLGSAIPWALLFSTATLISTGWG) are cleaved as a signal peptide. A disulfide bridge connects residues Cys30 and Cys51. The 101-residue stretch at 30–130 (CGGRLTDDYG…SPYEIIFLRD (101 aa)) folds into the CUB domain. The N-linked (GlcNAc...) (complex) asparagine glycan is linked to Asn71. Cys74 and Cys95 are oxidised to a cystine.

In terms of assembly, monomer or heterodimer with PSP-II (depending on the type of glycosylation of PSP-I). Seminal plasma or sperm.

It localises to the secreted. Functionally, not yet identified, major porcine seminal plasma protein. Can bind soybean trypsin inhibitor after deglycosylation. In Sus scrofa (Pig), this protein is Major seminal plasma glycoprotein PSP-I.